Consider the following 169-residue polypeptide: FAM231A/C-like protein LOC102723383 (169 aa).

A disordered region spans residues 82-140 (LIRSGSSQNESQEDQGAGLISQAGLKADNRRESSTWANEVEDRRPQCTPALNLTPSHPH).

Belongs to the FAM231 family.

The polypeptide is FAM231A/C-like protein LOC102723383 (Homo sapiens (Human)).